The chain runs to 92 residues: YcgL domain-containing protein Sfri_1738 (92 aa).

The 85-residue stretch at 1–85 (MICAVYKSGR…PQINLLEQHK (85 aa)) folds into the YcgL domain.

In Shewanella frigidimarina (strain NCIMB 400), this protein is YcgL domain-containing protein Sfri_1738.